Consider the following 194-residue polypeptide: NADH-quinone oxidoreductase subunit B (194 aa).

Positions 73, 74, 138, and 168 each coordinate [4Fe-4S] cluster.

This sequence belongs to the complex I 20 kDa subunit family. As to quaternary structure, NDH-1 is composed of 14 different subunits. Subunits NuoB, C, D, E, F, and G constitute the peripheral sector of the complex. [4Fe-4S] cluster is required as a cofactor.

It is found in the cell inner membrane. The enzyme catalyses a quinone + NADH + 5 H(+)(in) = a quinol + NAD(+) + 4 H(+)(out). NDH-1 shuttles electrons from NADH, via FMN and iron-sulfur (Fe-S) centers, to quinones in the respiratory chain. The immediate electron acceptor for the enzyme in this species is believed to be ubiquinone. Couples the redox reaction to proton translocation (for every two electrons transferred, four hydrogen ions are translocated across the cytoplasmic membrane), and thus conserves the redox energy in a proton gradient. The chain is NADH-quinone oxidoreductase subunit B from Rhizobium leguminosarum bv. trifolii (strain WSM2304).